The chain runs to 293 residues: MNNIDKIEKDIMYMNPIDSKFFFKPTVINDNNNNNNINNINNINNNYTKINNYNNLINTNINNKNNSNSNSVFSQPDQAATITNISNPCTLASPTPSSPSNNKLLMIQRDDMEKDINDYSNLNFDPHQMSKPSYHHHSHSHSHHSHSHSHSQNSHYLNNLQLQNLQNFQQQHQQKPISPPPSSLNIVVNRNRFFENSDPNFSYFSHNESNISDFFYNYVHYDHNFNFNENSFIFNTNNNNNNNNEINNSVIGNDILQTVPPSPTPTPPPPPQQQQFTQIKNTNYIFVPQQLKQ.

Disordered stretches follow at residues 121–154 and 254–274; these read NLNF…SQNS and DILQ…PQQQ. Residues 133–149 are compositionally biased toward basic residues; the sequence is SYHHHSHSHSHHSHSHS. A compositionally biased stretch (pro residues) spans 260–272; that stretch reads PPSPTPTPPPPPQ.

This is an uncharacterized protein from Dictyostelium discoideum (Social amoeba).